We begin with the raw amino-acid sequence, 177 residues long: RNA silencing suppressor (177 aa).

As to quaternary structure, homooctamer. The eight monomers assemble into a closed ring that binds RNA.

The protein localises to the host cytoplasm. In terms of biological role, acts as a suppressor of RNA-mediated gene silencing, also known as post-transcriptional gene silencing (PTGS), a mechanism of plant viral defense that limits the accumulation of viral RNAs. Binds to ssRNAs and dsRNAs in vitro. Also functions as a replication enhancer. This is RNA silencing suppressor from Beta vulgaris (Sugar beet).